The following is a 108-amino-acid chain: UPF0145 protein MADE_1007770 (108 aa).

Belongs to the UPF0145 family.

The sequence is that of UPF0145 protein MADE_1007770 from Alteromonas mediterranea (strain DSM 17117 / CIP 110805 / LMG 28347 / Deep ecotype).